Consider the following 348-residue polypeptide: Large ribosomal subunit protein uL3m (348 aa).

The transit peptide at 1–40 (MPGWRLLAWAGARVLDRGTGGLGTALGSGNRTDICVLVRS) directs the protein to the mitochondrion.

Belongs to the universal ribosomal protein uL3 family. Component of the mitochondrial ribosome large subunit (39S) which comprises a 16S rRNA and about 50 distinct proteins.

It is found in the mitochondrion. This Bos taurus (Bovine) protein is Large ribosomal subunit protein uL3m (MRPL3).